Consider the following 310-residue polypeptide: Junctional adhesion molecule C (310 aa).

A signal peptide spans 1 to 31 (MALSRRLRLRLCARLPDFFLLLLFRGCVIEA). Over 32–241 (VNLKSSNRNP…GQDMEVYDLN (210 aa)) the chain is Extracellular. An Ig-like V-type domain is found at 35 to 127 (KSSNRNPVVH…VALNDRKEVD (93 aa)). 2 disulfides stabilise this stretch: cysteine 53-cysteine 115 and cysteine 160-cysteine 219. N-linked (GlcNAc...) asparagine glycans are attached at residues asparagine 104 and asparagine 192. One can recognise an Ig-like C2-type domain in the interval 139–236 (PVAPVCRVPK…AARCEGQDME (98 aa)). Residues 242 to 262 (IAGIIGGVLVVLIVLAVITMG) form a helical membrane-spanning segment. Residues 263–310 (ICCAYRRGCFISSKQDGESYKSPGKHEGVNYIRTSEEGDFRHKSSFVI) are Cytoplasmic-facing. 2 S-palmitoyl cysteine lipidation sites follow: cysteine 264 and cysteine 265.

This sequence belongs to the immunoglobulin superfamily. As to quaternary structure, interacts with ITGAM. Interacts with GORASP2. In terms of processing, proteolytically cleaved from endothelial cells surface into a soluble form by ADAM10 and ADAM17; the release of soluble JAM3 is increased by pro-inflammatory factors. Post-translationally, S-palmitoylated by ZDHHC7. S-palmitoylation promotes expression at tight junctions.

The protein localises to the cell membrane. It localises to the cell junction. The protein resides in the desmosome. Its subcellular location is the tight junction. It is found in the secreted. Junctional adhesion protein that mediates heterotypic cell-cell interactions with its cognate receptor JAM2 to regulate different cellular processes. Plays a role in homing and mobilization of hematopoietic stem and progenitor cells within the bone marrow. At the surface of bone marrow stromal cells, it contributes to the retention of the hematopoietic stem and progenitor cells expressing JAM3. Plays a central role in leukocytes extravasation by facilitating transmigration through the endothelium. Plays a role in spermatogenesis where JAM2 and JAM3, which are respectively expressed by Sertoli and germ cells, mediate an interaction between both cell types and play an essential role in the anchorage of germ cells onto Sertoli cells and the assembly of cell polarity complexes during spermatid differentiation. Also functions as a counter-receptor for ITGAM, mediating leukocyte-platelet interactions and is involved in the regulation of transepithelial migration of polymorphonuclear neutrophils (PMN). Plays a role in angiogenesis. Plays a role in the regulation of cell migration. During myogenesis, it is involved in myocyte fusion. Functionally, promotes chemotaxis of vascular endothelial cells and stimulates angiogenesis. The chain is Junctional adhesion molecule C (Jam3) from Rattus norvegicus (Rat).